Here is a 534-residue protein sequence, read N- to C-terminus: MATGLQVPLPWLATGLLLLLSVQPWAESGKVLVVPIDGSHWLSMREVLRELHARGHQAVVLTPEVNMHIKEENFFTLTTYAISWTQDEFDRHVLGHTQLYFETEHFLKKFFRSMAMLNNMSLVYHRSCVELLHNEALIRHLNATSFDVVLTDPVNLCAAVLAKYLSIPTVFFLRNIPCDLDFKGTQCPNPSSYIPRLLTTNSDHMTFMQRVKNMLYPLALSYICHAFSAPYASLASELFQREVSVVDILSHASVWLFRGDFVMDYPRPIMPNMVFIGGINCANRKPLSQEFEAYINASGEHGIVVFSLGSMVSEIPEKKAMAIADALGKIPQTVLWRYTGTRPSNLANNTILVKWLPQNDLLGHPMTRAFITHAGSHGVYESICNGVPMVMMPLFGDQMDNAKRMETKGAGVTLNVLEMTSEDLENALKAVINDKSYKENIMRLSSLHKDRPVEPLDLAVFWVEFVMRHKGAPHLRPAAHDLTWYQYHSLDVIGFLLAVVLTVAFITFKCCAYGYRKCLGKKGRVKKAHKSKTH.

The first 28 residues, 1 to 28 (MATGLQVPLPWLATGLLLLLSVQPWAES), serve as a signal peptide directing secretion. Asn-119, Asn-142, Asn-296, and Asn-348 each carry an N-linked (GlcNAc...) asparagine glycan. The chain crosses the membrane as a helical span at residues 492-508 (VIGFLLAVVLTVAFITF).

Belongs to the UDP-glycosyltransferase family. Homodimer. Homooligomer. Interacts with UGT1A1, UGT1A4, UGT1A6, UGT1A7, UGT1A8, UGT1A9 and UGT1A10 to form heterodimers. Isoform 1 interacts with isoform 2/i2 suggesting that oligomerization is involved in negative regulation of transferase activity by isoform 2. Isoform 1 also interacts with respective i2 isoforms of UGT1A1, UGT1A4, UGT1A6, UGT1A7, UGT1A8, UGT1A9 and UGT1A10. In terms of tissue distribution, expressed in liver, kidney, colon, esophagus and small intestine. Expressed in liver, kidney and colon. Not expressed in esophagus and small intestine.

It localises to the endoplasmic reticulum membrane. The enzyme catalyses glucuronate acceptor + UDP-alpha-D-glucuronate = acceptor beta-D-glucuronoside + UDP + H(+). It carries out the reaction 17beta-estradiol + UDP-alpha-D-glucuronate = 17beta-estradiol 3-O-(beta-D-glucuronate) + UDP + H(+). It catalyses the reaction 17beta-estradiol + UDP-alpha-D-glucuronate = 17beta-estradiol 17-O-(beta-D-glucuronate) + UDP + H(+). The catalysed reaction is 17alpha-estradiol + UDP-alpha-D-glucuronate = 17alpha-estradiol 3-O-(beta-D-glucuronate) + UDP + H(+). The enzyme catalyses estrone + UDP-alpha-D-glucuronate = estrone 3-O-(beta-D-glucuronate) + UDP + H(+). It carries out the reaction chenodeoxycholate + UDP-alpha-D-glucuronate = chenodeoxycholoyl-24-O-(beta-D-glucuronate) + UDP. It catalyses the reaction deoxycholate + UDP-alpha-D-glucuronate = deoxycholoyl-24-O-(beta-D-glucuronate) + UDP. The catalysed reaction is lithocholate + UDP-alpha-D-glucuronate = lithocholoyl-24-O-(beta-D-glucuronate) + UDP. The enzyme catalyses hyodeoxycholate + UDP-alpha-D-glucuronate = hyodeoxycholoyl-24-O-(beta-D-glucuronate) + UDP. It carries out the reaction hyocholate + UDP-alpha-D-glucuronate = hyocholoyl-24-O-(beta-D-glucuronate) + UDP. It catalyses the reaction calcidiol + UDP-alpha-D-glucuronate = calcidiol 25-O-(beta-D-glucuronide) + UDP + H(+). The catalysed reaction is (E)-ferulate + UDP-alpha-D-glucuronate = (E)-4-O-(beta-D-glucuronosyl)-ferulate + UDP + H(+). The enzyme catalyses (E)-ferulate + UDP-alpha-D-glucuronate = (E)-ferulic acid beta-D-glucuronate ester + UDP. It carries out the reaction losartan + UDP-alpha-D-glucuronate = losartan-2-N-beta-D-glucuronide + UDP. It catalyses the reaction candesartan + UDP-alpha-D-glucuronate = candesartan-2-N-beta-D-glucuronide + UDP. The catalysed reaction is zolasartan + UDP-alpha-D-glucuronate = zolarsartan-2-N-beta-D-glucuronide + UDP. UDP-glucuronosyltransferase (UGT) that catalyzes phase II biotransformation reactions in which lipophilic substrates are conjugated with glucuronic acid to increase the metabolite's water solubility, thereby facilitating excretion into either the urine or bile. Essential for the elimination and detoxification of drugs, xenobiotics and endogenous compounds. Catalyzes the glucuronidation of endogenous estrogen hormones such as estradiol and estrone. Contributes to bile acid (BA) detoxification by catalyzing the glucuronidation of BA substrates, which are natural detergents for dietary lipids absorption. Involved in the glucuronidation of calcidiol, which is the major circulating form of vitamin D3, essential for the regulation of calcium and phosphate homeostasis. Involved in the glucuronidation of the phytochemical ferulic acid at the phenolic or the carboxylic acid group. Involved in the glucuronidation of the AGTR1 angiotensin receptor antagonists losartan, candesartan and zolarsartan, which can inhibit the effect of angiotensin II. In terms of biological role, lacks UDP-glucuronosyltransferase (UGT) activity but acts as a negative regulator of isoform 1. This chain is UDP-glucuronosyltransferase 1A3, found in Homo sapiens (Human).